Reading from the N-terminus, the 499-residue chain is UDP-N-acetylmuramoylalanine--D-glutamate ligase (499 aa).

128–134 (GTNGKTT) is a binding site for ATP.

This sequence belongs to the MurCDEF family.

The protein localises to the cytoplasm. The enzyme catalyses UDP-N-acetyl-alpha-D-muramoyl-L-alanine + D-glutamate + ATP = UDP-N-acetyl-alpha-D-muramoyl-L-alanyl-D-glutamate + ADP + phosphate + H(+). It participates in cell wall biogenesis; peptidoglycan biosynthesis. Cell wall formation. Catalyzes the addition of glutamate to the nucleotide precursor UDP-N-acetylmuramoyl-L-alanine (UMA). This Rhodococcus jostii (strain RHA1) protein is UDP-N-acetylmuramoylalanine--D-glutamate ligase.